The sequence spans 692 residues: Elongation factor G (692 aa).

The 275-residue stretch at Ala8–Leu282 folds into the tr-type G domain. GTP contacts are provided by residues Ala17–Thr24, Asp81–His85, and Asn135–Asp138.

This sequence belongs to the TRAFAC class translation factor GTPase superfamily. Classic translation factor GTPase family. EF-G/EF-2 subfamily.

Its subcellular location is the cytoplasm. Catalyzes the GTP-dependent ribosomal translocation step during translation elongation. During this step, the ribosome changes from the pre-translocational (PRE) to the post-translocational (POST) state as the newly formed A-site-bound peptidyl-tRNA and P-site-bound deacylated tRNA move to the P and E sites, respectively. Catalyzes the coordinated movement of the two tRNA molecules, the mRNA and conformational changes in the ribosome. This is Elongation factor G from Streptococcus equi subsp. zooepidemicus (strain MGCS10565).